We begin with the raw amino-acid sequence, 353 residues long: Photosystem II protein D1 (353 aa).

An N-acetylthreonine modification is found at threonine 2. Threonine 2 is modified (phosphothreonine). 3 helical membrane passes run 29-46 (YIGWFGVLMIPTLLTATS), 118-133 (HFLLGVACYMGREWEL), and 142-156 (WIAVAYSAPVAAATA). A chlorophyll a-binding site is contributed by histidine 118. Position 126 (tyrosine 126) interacts with pheophytin a. [CaMn4O5] cluster is bound by residues aspartate 170 and glutamate 189. The chain crosses the membrane as a helical span at residues 197-218 (FHMLGVAGVFGGSLFSAMHGSL). A chlorophyll a-binding site is contributed by histidine 198. A quinone contacts are provided by residues histidine 215 and 264 to 265 (SF). Histidine 215 contacts Fe cation. Histidine 272 lines the Fe cation pocket. Residues 274-288 (FLAAWPVVGIWFTAL) form a helical membrane-spanning segment. 4 residues coordinate [CaMn4O5] cluster: histidine 332, glutamate 333, aspartate 342, and alanine 344. A propeptide spanning residues 345–353 (ALEVPSLNG) is cleaved from the precursor.

It belongs to the reaction center PufL/M/PsbA/D family. PSII is composed of 1 copy each of membrane proteins PsbA, PsbB, PsbC, PsbD, PsbE, PsbF, PsbH, PsbI, PsbJ, PsbK, PsbL, PsbM, PsbT, PsbX, PsbY, PsbZ, Psb30/Ycf12, at least 3 peripheral proteins of the oxygen-evolving complex and a large number of cofactors. It forms dimeric complexes. The cofactor is The D1/D2 heterodimer binds P680, chlorophylls that are the primary electron donor of PSII, and subsequent electron acceptors. It shares a non-heme iron and each subunit binds pheophytin, quinone, additional chlorophylls, carotenoids and lipids. D1 provides most of the ligands for the Mn4-Ca-O5 cluster of the oxygen-evolving complex (OEC). There is also a Cl(-1) ion associated with D1 and D2, which is required for oxygen evolution. The PSII complex binds additional chlorophylls, carotenoids and specific lipids.. Post-translationally, tyr-161 forms a radical intermediate that is referred to as redox-active TyrZ, YZ or Y-Z. In terms of processing, C-terminally processed by CTPA; processing is essential to allow assembly of the oxygen-evolving complex and thus photosynthetic growth.

It is found in the plastid. The protein resides in the chloroplast thylakoid membrane. It catalyses the reaction 2 a plastoquinone + 4 hnu + 2 H2O = 2 a plastoquinol + O2. Its function is as follows. Photosystem II (PSII) is a light-driven water:plastoquinone oxidoreductase that uses light energy to abstract electrons from H(2)O, generating O(2) and a proton gradient subsequently used for ATP formation. It consists of a core antenna complex that captures photons, and an electron transfer chain that converts photonic excitation into a charge separation. The D1/D2 (PsbA/PsbD) reaction center heterodimer binds P680, the primary electron donor of PSII as well as several subsequent electron acceptors. In Lolium perenne (Perennial ryegrass), this protein is Photosystem II protein D1.